A 434-amino-acid polypeptide reads, in one-letter code: Protein phosphatase 2C 56 (434 aa).

The region spanning 128–422 (LYGFTSICGR…DNISVVVVDL (295 aa)) is the PPM-type phosphatase domain. Mg(2+) contacts are provided by D177, D261, S262, D347, and D413. The short motif at 423 to 427 (KPRRK) is the Nuclear localization signal element.

The protein belongs to the PP2C family. As to quaternary structure, interacts with SPK1, ATHB-6, CIPK15/PKS3, GPX3, SRK2E/OST1, SRK2D, SRK2I, SCAR1, SCAR2, SCAR3 and SCARL. Binds to the PA released by the phospholipase D alpha 1 (PLDALPHA1) in response to ABA during the stomatal closure regulation. Interacts with ABA-bounded PYR1, PYL1, PYL2, PYL3, PYL4, PYL5, PYL6, PYL7, PYL8, PYL9, PYL10, and with free PYL2, PYL3, PYL4 and PYL13. Binds to RPL12B, CPK21 and CPK23. Binds to MAPKKK18. Interacts with KIN10. Interacts with phosphorylated PYL8/RCAR3. Mg(2+) serves as cofactor. Mn(2+) is required as a cofactor. Expressed in seeds and seedlings. In roots, confined to lateral root caps and columella cells.

It localises to the nucleus. It is found in the cytoplasm. The protein resides in the cell membrane. It catalyses the reaction O-phospho-L-seryl-[protein] + H2O = L-seryl-[protein] + phosphate. It carries out the reaction O-phospho-L-threonyl-[protein] + H2O = L-threonyl-[protein] + phosphate. With respect to regulation, phosphatase activity repressed by oxidized GPX3 and phosphatidic acid (PA). PA is produced by PLD alpha 1 in response to ABA. Repressed by PYR/PYL/RCAR ABA receptors in an ABA-dependent manner. Its function is as follows. Key component and repressor of the abscisic acid (ABA) signaling pathway that regulates numerous ABA responses, such as stomatal closure, osmotic water permeability of the plasma membrane (Pos), drought-induced resistance and rhizogenesis, response to glucose, high light stress, seed germination and inhibition of vegetative growth. During the stomatal closure regulation, modulates the inward calcium-channel permeability as well as the actin reorganization in guard cells in response to ABA. Involved in the resistance to the bacterial pathogen Pseudomonas syringae pv. tomato. Controls negatively fibrillin expression that is involved in mediating ABA-induced photoprotection. May be involved in ABA content regulation. Plays a role in the Pro accumulation in response to reduced water availability (low water potential). Required for the ABA negative regulation of the ethylene-induced hyponastic growth. Involved in acquired thermotolerance of root growth and seedling survival. Activates/represses SRK2E/OST1 in response to ABA-dependent stimuli, especially in stomata closure regulation involving SLAC1. Represses MAPKKK18 activity and promotes MAPKKK18 degradation by the proteasome pathway upon abscisic acid (ABA) treatment. Represses KIN10 activity by the specific dephosphorylation of its T-loop Thr-198, leading to a poststress inactivation of SnRK1 signaling. Restricts MAPKKK20 activity by dephosphorylation. The sequence is that of Protein phosphatase 2C 56 from Arabidopsis thaliana (Mouse-ear cress).